The following is a 110-amino-acid chain: Membrane-associated protein slr1513 (110 aa).

It localises to the cellular thylakoid membrane. It is found in the cell membrane. The protein is Membrane-associated protein slr1513 of Synechocystis sp. (strain ATCC 27184 / PCC 6803 / Kazusa).